A 22-amino-acid chain; its full sequence is thr operon leader peptide (22 aa).

The protein belongs to the thr operon leader peptide family.

In terms of biological role, this protein is involved in control of the biosynthesis of threonine. This Yersinia enterocolitica serotype O:8 / biotype 1B (strain NCTC 13174 / 8081) protein is thr operon leader peptide.